Consider the following 664-residue polypeptide: Glycine--tRNA ligase beta subunit (664 aa).

This sequence belongs to the class-II aminoacyl-tRNA synthetase family. As to quaternary structure, tetramer of two alpha and two beta subunits.

The protein localises to the cytoplasm. It catalyses the reaction tRNA(Gly) + glycine + ATP = glycyl-tRNA(Gly) + AMP + diphosphate. The protein is Glycine--tRNA ligase beta subunit of Rickettsia typhi (strain ATCC VR-144 / Wilmington).